Reading from the N-terminus, the 247-residue chain is Bax inhibitor 1 (247 aa).

N-acetylmethionine is present on M1. 6 consecutive transmembrane segments (helical) span residues V58 to L78, L92 to I112, I118 to M138, Y145 to A165, A173 to V193, and H212 to L232.

This sequence belongs to the BI1 family. In terms of assembly, interacts (via C-terminus) with calmodulin, CYTB5-B and CYTB5-D. Interacts indirectly with FAH1 via CYTB5-D. In terms of tissue distribution, expressed in root tips, root vasculature, flower tissues, including stamens and sepals, and in the base of siliques. Not detected in mature leaves.

The protein localises to the endoplasmic reticulum membrane. Suppressor of apoptosis. Modulator of endoplasmic reticulum stress-mediated programmed cell death. Involved in methyl jasmonate-induced leaf senescence through regulating cytoplasmic calcium level. The protein is Bax inhibitor 1 (BI-1) of Arabidopsis thaliana (Mouse-ear cress).